Here is a 181-residue protein sequence, read N- to C-terminus: Ribonuclease HII (181 aa).

The RNase H type-2 domain occupies 1–181 (MICGIDEVGR…SLHRKNFKLI (181 aa)). Aspartate 6, glutamate 7, and aspartate 98 together coordinate a divalent metal cation.

The protein belongs to the RNase HII family. Mn(2+) is required as a cofactor. It depends on Mg(2+) as a cofactor.

It localises to the cytoplasm. The enzyme catalyses Endonucleolytic cleavage to 5'-phosphomonoester.. Its function is as follows. Endonuclease that specifically degrades the RNA of RNA-DNA hybrids. This Borreliella burgdorferi (strain ZS7) (Borrelia burgdorferi) protein is Ribonuclease HII.